Reading from the N-terminus, the 91-residue chain is Preprofallaxidin-2 (91 aa).

An N-terminal signal peptide occupies residues 1–22 (MASLKKSLFLVLFLGLVSLSIC). Positions 23 to 49 (EKEKRENEGNENEEEEENHEEGSEEKR) are excised as a propeptide. Residues 24–49 (KEKRENEGNENEEEEENHEEGSEEKR) form a disordered region. Residues 31–41 (GNENEEEEENH) show a composition bias toward acidic residues. Leu-65 carries the leucine amide modification. The propeptide occupies 69–73 (SEEKR). Leu-89 is modified (leucine amide).

This sequence belongs to the frog skin active peptide (FSAP) family. Dermaseptin subfamily. In terms of tissue distribution, expressed by the skin glands.

The protein localises to the secreted. Fallaxidin-3.1 shows antibacterial activity against the Gram-positive bacteria E.faecalis (MIC=100 uM) and L.lactis (MIC=100 uM). No antibacterial activity against the Gram-positive bacteria B.cereus, L.innocua, M.luteus, S.epidermidis, S.uberis and S.aureus, or the Gram-negative bacteria E.cloacae and E.coli. In terms of biological role, fallaxidin-3.2 shows antibacterial activity against the Gram-positive bacteria E.faecalis (MIC=100 uM) and L.lactis (MIC=500 uM). No antibacterial activity against the Gram-positive bacteria B.cereus, L.innocua, M.luteus, S.epidermidis, S.uberis and S.aureus, or the Gram-negative bacteria E.cloacae and E.coli. The protein is Preprofallaxidin-2 of Litoria fallax (Eastern dwarf tree frog).